The primary structure comprises 310 residues: B3 domain-containing protein At4g02870 (310 aa).

Polar residues predominate over residues Met1–Val21. Residues Met1 to Val39 are disordered. A DNA-binding region (TF-B3) is located at residues Arg205–Asn300.

Its subcellular location is the nucleus. The polypeptide is B3 domain-containing protein At4g02870 (ARF42) (Arabidopsis thaliana (Mouse-ear cress)).